The following is a 146-amino-acid chain: Probable NADH dehydrogenase [ubiquinone] 1 alpha subcomplex subunit 12 (146 aa).

The protein belongs to the complex I NDUFA12 subunit family. Complex I is composed of 45 different subunits.

The protein resides in the mitochondrion inner membrane. Functionally, accessory subunit of the mitochondrial membrane respiratory chain NADH dehydrogenase (Complex I), that is believed not to be involved in catalysis. Complex I functions in the transfer of electrons from NADH to the respiratory chain. The immediate electron acceptor for the enzyme is believed to be ubiquinone. The chain is Probable NADH dehydrogenase [ubiquinone] 1 alpha subcomplex subunit 12 from Caenorhabditis elegans.